We begin with the raw amino-acid sequence, 216 residues long: Thiamine-phosphate synthase (216 aa).

4-amino-2-methyl-5-(diphosphooxymethyl)pyrimidine contacts are provided by residues 41-45 and asparagine 73; that span reads QYREK. Mg(2+) is bound by residues aspartate 74 and aspartate 93. Residue serine 111 participates in 4-amino-2-methyl-5-(diphosphooxymethyl)pyrimidine binding. 137–139 contributes to the 2-[(2R,5Z)-2-carboxy-4-methylthiazol-5(2H)-ylidene]ethyl phosphate binding site; that stretch reads TTT. Lysine 140 is a binding site for 4-amino-2-methyl-5-(diphosphooxymethyl)pyrimidine. 2-[(2R,5Z)-2-carboxy-4-methylthiazol-5(2H)-ylidene]ethyl phosphate is bound by residues glycine 168 and 188–189; that span reads VS.

This sequence belongs to the thiamine-phosphate synthase family. Mg(2+) serves as cofactor.

The catalysed reaction is 2-[(2R,5Z)-2-carboxy-4-methylthiazol-5(2H)-ylidene]ethyl phosphate + 4-amino-2-methyl-5-(diphosphooxymethyl)pyrimidine + 2 H(+) = thiamine phosphate + CO2 + diphosphate. It carries out the reaction 2-(2-carboxy-4-methylthiazol-5-yl)ethyl phosphate + 4-amino-2-methyl-5-(diphosphooxymethyl)pyrimidine + 2 H(+) = thiamine phosphate + CO2 + diphosphate. It catalyses the reaction 4-methyl-5-(2-phosphooxyethyl)-thiazole + 4-amino-2-methyl-5-(diphosphooxymethyl)pyrimidine + H(+) = thiamine phosphate + diphosphate. Its pathway is cofactor biosynthesis; thiamine diphosphate biosynthesis; thiamine phosphate from 4-amino-2-methyl-5-diphosphomethylpyrimidine and 4-methyl-5-(2-phosphoethyl)-thiazole: step 1/1. Its function is as follows. Condenses 4-methyl-5-(beta-hydroxyethyl)thiazole monophosphate (THZ-P) and 2-methyl-4-amino-5-hydroxymethyl pyrimidine pyrophosphate (HMP-PP) to form thiamine monophosphate (TMP). The sequence is that of Thiamine-phosphate synthase from Chloroflexus aurantiacus (strain ATCC 29366 / DSM 635 / J-10-fl).